Consider the following 105-residue polypeptide: CRISPR-associated endoribonuclease Cas2 1 (105 aa).

Residue Asp-20 coordinates Mg(2+).

The protein belongs to the CRISPR-associated endoribonuclease Cas2 protein family. Homodimer, forms a heterotetramer with a Cas1 homodimer. Mg(2+) is required as a cofactor.

CRISPR (clustered regularly interspaced short palindromic repeat), is an adaptive immune system that provides protection against mobile genetic elements (viruses, transposable elements and conjugative plasmids). CRISPR clusters contain sequences complementary to antecedent mobile elements and target invading nucleic acids. CRISPR clusters are transcribed and processed into CRISPR RNA (crRNA). Functions as a ssRNA-specific endoribonuclease. Involved in the integration of spacer DNA into the CRISPR cassette. In Nitrosomonas europaea (strain ATCC 19718 / CIP 103999 / KCTC 2705 / NBRC 14298), this protein is CRISPR-associated endoribonuclease Cas2 1 (cas21).